A 209-amino-acid chain; its full sequence is MSKVTQIAHPLILHKLAIIRNKNTGSKDFRELVEEVAMLMAYEVTRDLPLEEVEIETPICKTKCKMLSGKKMAIVPILRAGLGMVDGMLKLIPAAKVGHIGMYRDEETFKPVEYFCKMPQDIHERDIIVTDPMLATGGSAIDAINALKKRGAKSIRLMCLISSPEGIKAVMDAHPDVDIYVGDIDERLNEHGYIIPGLGDAGDRLFGTK.

5-phospho-alpha-D-ribose 1-diphosphate is bound by residues arginine 79, arginine 104, and 131–139; that span reads DPMLATGGS. Residues isoleucine 194 and 199 to 201 each bind uracil; that span reads GDA. Aspartate 200 contacts 5-phospho-alpha-D-ribose 1-diphosphate.

Belongs to the UPRTase family. It depends on Mg(2+) as a cofactor.

The catalysed reaction is UMP + diphosphate = 5-phospho-alpha-D-ribose 1-diphosphate + uracil. It participates in pyrimidine metabolism; UMP biosynthesis via salvage pathway; UMP from uracil: step 1/1. With respect to regulation, allosterically activated by GTP. In terms of biological role, catalyzes the conversion of uracil and 5-phospho-alpha-D-ribose 1-diphosphate (PRPP) to UMP and diphosphate. The chain is Uracil phosphoribosyltransferase from Clostridium novyi (strain NT).